A 222-amino-acid chain; its full sequence is MSGKPVLHYFNARGRMECIRWLLAAAGVEFEEKLIQSPEDLEKLKKDGNLMFDQVPMVEIDGMKLAQTRAILNYIATKYDLYGKDMKERALIDMYSEGILDLTEMIIQLVICPPDQREAKTALAKDRTKNRYLPAFEKVLKSHGQDYLVGNRLTRVDIHLLELLLYVEEFDASLLTSFPLLKAFKSRISSLPNVKKFLQPGSQRKPAMDAKQIEEARKVFKF.

In terms of domain architecture, GST N-terminal spans 3–83; the sequence is GKPVLHYFNA…YIATKYDLYG (81 aa). N6-succinyllysine is present on Lys-4. Glutathione-binding positions include Tyr-9, Lys-45, 54–55, and 67–68; these read QV and QT. Positions 85–208 constitute a GST C-terminal domain; the sequence is DMKERALIDM…QPGSQRKPAM (124 aa).

This sequence belongs to the GST superfamily. Alpha family. Homodimer or heterodimer of GSTA1 and GSTA2.

The protein localises to the cytoplasm. The enzyme catalyses RX + glutathione = an S-substituted glutathione + a halide anion + H(+). Functionally, catalyzes the conjugation of glutathione to a large variety of electrophilic compounds. This is Glutathione S-transferase alpha-2 (Gsta2) from Rattus norvegicus (Rat).